The primary structure comprises 173 residues: Crossover junction endodeoxyribonuclease RuvC (173 aa).

Catalysis depends on residues Asp-11, Glu-71, and Asp-143. Residues Asp-11, Glu-71, and Asp-143 each contribute to the Mg(2+) site.

The protein belongs to the RuvC family. Homodimer which binds Holliday junction (HJ) DNA. The HJ becomes 2-fold symmetrical on binding to RuvC with unstacked arms; it has a different conformation from HJ DNA in complex with RuvA. In the full resolvosome a probable DNA-RuvA(4)-RuvB(12)-RuvC(2) complex forms which resolves the HJ. Mg(2+) serves as cofactor.

It is found in the cytoplasm. It carries out the reaction Endonucleolytic cleavage at a junction such as a reciprocal single-stranded crossover between two homologous DNA duplexes (Holliday junction).. The RuvA-RuvB-RuvC complex processes Holliday junction (HJ) DNA during genetic recombination and DNA repair. Endonuclease that resolves HJ intermediates. Cleaves cruciform DNA by making single-stranded nicks across the HJ at symmetrical positions within the homologous arms, yielding a 5'-phosphate and a 3'-hydroxyl group; requires a central core of homology in the junction. The consensus cleavage sequence is 5'-(A/T)TT(C/G)-3'. Cleavage occurs on the 3'-side of the TT dinucleotide at the point of strand exchange. HJ branch migration catalyzed by RuvA-RuvB allows RuvC to scan DNA until it finds its consensus sequence, where it cleaves and resolves the cruciform DNA. This chain is Crossover junction endodeoxyribonuclease RuvC, found in Brucella abortus (strain 2308).